We begin with the raw amino-acid sequence, 931 residues long: GPI ethanolamine phosphate transferase 1 (931 aa).

A topological domain (cytoplasmic) is located at residue methionine 1. Residues 2–22 form a helical membrane-spanning segment; the sequence is LLFFALGLLIHFVFFASIFDI. Residues 23 to 442 lie on the Lumenal side of the membrane; sequence YFTSPLVHGM…SYYHTYDRLF (420 aa). Asparagine 128, asparagine 192, asparagine 295, and asparagine 350 each carry an N-linked (GlcNAc...) asparagine glycan. A helical membrane pass occupies residues 443–463; that stretch reads LGINVAVGFVGWMSYTSLLII. Residues 464–480 are Cytoplasmic-facing; that stretch reads KSHSNIPKGTRKEGKKP. A helical transmembrane segment spans residues 481 to 501; that stretch reads HCLLLYSFIATGVLVACFLMI. A topological domain (lumenal) is located at residue glutamine 502. The chain crosses the membrane as a helical span at residues 503 to 523; the sequence is ACPWTYYVYCLLPVPIWYAVL. Residues 524–543 lie on the Cytoplasmic side of the membrane; the sequence is REHEVIQDLVESLLTFPRSH. The chain crosses the membrane as a helical span at residues 544–564; the sequence is FVAYLLVFTLGIEVLVLSFFY. Arginine 565 is a topological domain (lumenal). Residues 566 to 586 traverse the membrane as a helical segment; sequence YMLTAGLIVFAGWPFLTQLWT. Topologically, residues 587-591 are cytoplasmic; the sequence is RAKIT. The chain crosses the membrane as a helical span at residues 592 to 612; it reads FLSWAFFSLLLAVFPLMPVVG. The Lumenal segment spans residues 613–618; that stretch reads RKPNLS. Asparagine 616 is a glycosylation site (N-linked (GlcNAc...) asparagine). The helical transmembrane segment at 619–639 threads the bilayer; it reads LVMGAGFLVLLLSLAVVTTLG. The Cytoplasmic segment spans residues 640 to 649; it reads KRNIKLVKGE. A helical membrane pass occupies residues 650-670; that stretch reads LLVLLLQMLSTVLSMYVVYST. The Lumenal segment spans residues 671-685; the sequence is HHSLLKKEGLPLMNQ. The helical transmembrane segment at 686–706 threads the bilayer; that stretch reads IVSWATLASSLVAPLLSSTAL. Topologically, residues 707-723 are cytoplasmic; that stretch reads SQRLASILLSLMSTYLL. A helical transmembrane segment spans residues 724–744; that stretch reads LSTGYEALFPLVLSCLMFVWI. The Lumenal segment spans residues 745 to 786; sequence QVEQETLQQPGVSCKQKLTSIQFTCDTDIAQFRQLCPDDIRR. The chain crosses the membrane as a helical span at residues 787 to 807; sequence AFFLVFFLLTAFFGTGNIASI. Residues 808–824 lie on the Cytoplasmic side of the membrane; sequence NSFDLASVYCFLTVFSP. Residues 825–845 form a helical membrane-spanning segment; it reads FMMGALMMWKILIPFVLVMCA. At 846 to 858 the chain is on the lumenal side; the sequence is FEAVQITTQLSSK. Residues 859–879 form a helical membrane-spanning segment; sequence GLFLVVLIISDIMALHFFFLV. The Cytoplasmic segment spans residues 880-894; that stretch reads KDSGSWLDIGTSISH. A helical membrane pass occupies residues 895 to 915; that stretch reads YVIVMSMTIFLVFLNGLAQLL. Topologically, residues 916 to 931 are lumenal; that stretch reads TTKKLQLCGKPKSHLM.

Belongs to the PIGG/PIGN/PIGO family. PIGN subfamily.

The protein localises to the endoplasmic reticulum membrane. The protein operates within glycolipid biosynthesis; glycosylphosphatidylinositol-anchor biosynthesis. Ethanolamine phosphate transferase that catalyzes an ethanolamine phosphate (EtNP) transfer from phosphatidylethanolamine (PE) to the 2-OH position of the first alpha-1,4-linked mannose of the alpha-D-Man-(1-&gt;6)-alpha-D-Man-(1-&gt;4)-alpha-D-GlcN-(1-&gt;6)-(1-radyl,2-acyl-sn-glycero-3-phospho)-2-acyl-inositol (also termed H3) intermediate to generate an alpha-D-Man-(1-&gt;6)-2-PEtn-alpha-D-Man-(1-&gt;4)-alpha-D-GlcN-(1-&gt;6)-(1-radyl,2-acyl-sn-glycero-3-phospho)-2-acyl-inositol and participates in the eighth step of the glycosylphosphatidylinositol-anchor biosynthesis. May act as suppressor of replication stress and chromosome missegregation. The protein is GPI ethanolamine phosphate transferase 1 of Mus musculus (Mouse).